A 740-amino-acid chain; its full sequence is NAD(P)H-quinone oxidoreductase subunit 5, chloroplastic (740 aa).

Transmembrane regions (helical) follow at residues 9–29 (WIIPFIPLPVPILLGVGLLLF), 40–60 (WSFLSIFLLSIVMIFSLYLSI), 89–109 (IDPLSCIMVILITTVGIFVLI), 125–145 (FAYMGFFNTSMLGLVTSSNLI), 147–167 (IYFFWELVGMCSYLLIGFWFT), 185–205 (GDFGLLLGILGLYWVTGSFEF), 221–241 (VNLLFLTLCAFLFFMGPIAKS), 258–278 (TPISALIHAATMVAAGIFLVA), 283–303 (LFIVIPSIMYIISLIGIITIL), 327–347 (LGYMMLALGMGSYRSALFHLI), 354–374 (ALLFLGSGSIIHSMEALVGYS), 396–416 (TAFLLGTLSLCGIPPLACFWS), 425–445 (LLFSPIFAIIACSTAGLTAFY), 547–567 (ILFPMLVLLLFTLFIGAIGIP), 606–626 (FSVSIAFFGIFIAYWLYKPFY), and 718–738 (ISSYLFLYLSYVSLFFLFLKI).

This sequence belongs to the complex I subunit 5 family. As to quaternary structure, NDH is composed of at least 16 different subunits, 5 of which are encoded in the nucleus.

It is found in the plastid. Its subcellular location is the chloroplast thylakoid membrane. It catalyses the reaction a plastoquinone + NADH + (n+1) H(+)(in) = a plastoquinol + NAD(+) + n H(+)(out). It carries out the reaction a plastoquinone + NADPH + (n+1) H(+)(in) = a plastoquinol + NADP(+) + n H(+)(out). Functionally, NDH shuttles electrons from NAD(P)H:plastoquinone, via FMN and iron-sulfur (Fe-S) centers, to quinones in the photosynthetic chain and possibly in a chloroplast respiratory chain. The immediate electron acceptor for the enzyme in this species is believed to be plastoquinone. Couples the redox reaction to proton translocation, and thus conserves the redox energy in a proton gradient. The chain is NAD(P)H-quinone oxidoreductase subunit 5, chloroplastic (ndhF) from Aethionema grandiflorum (Persian stone-cress).